The primary structure comprises 209 residues: Pyridoxal 5'-phosphate synthase subunit PdxT (209 aa).

58–60 provides a ligand contact to L-glutamine; that stretch reads GES. The Nucleophile role is filled by cysteine 90. L-glutamine is bound by residues arginine 119 and 148–149; that span reads IR. Active-site charge relay system residues include histidine 185 and glutamate 187.

It belongs to the glutaminase PdxT/SNO family. As to quaternary structure, in the presence of PdxS, forms a dodecamer of heterodimers. Only shows activity in the heterodimer.

It carries out the reaction aldehydo-D-ribose 5-phosphate + D-glyceraldehyde 3-phosphate + L-glutamine = pyridoxal 5'-phosphate + L-glutamate + phosphate + 3 H2O + H(+). The catalysed reaction is L-glutamine + H2O = L-glutamate + NH4(+). It participates in cofactor biosynthesis; pyridoxal 5'-phosphate biosynthesis. Its function is as follows. Catalyzes the hydrolysis of glutamine to glutamate and ammonia as part of the biosynthesis of pyridoxal 5'-phosphate. The resulting ammonia molecule is channeled to the active site of PdxS. This Clavibacter michiganensis subsp. michiganensis (strain NCPPB 382) protein is Pyridoxal 5'-phosphate synthase subunit PdxT.